Reading from the N-terminus, the 228-residue chain is ATP-dependent dethiobiotin synthetase BioD (228 aa).

Residue 12–17 (EIGKTT) coordinates ATP. Residue threonine 16 coordinates Mg(2+). Lysine 37 is an active-site residue. Serine 41 serves as a coordination point for substrate. Residues aspartate 54, 116–119 (EGAG), and 205–207 (PRL) contribute to the ATP site. Aspartate 54 and glutamate 116 together coordinate Mg(2+).

The protein belongs to the dethiobiotin synthetase family. Homodimer. It depends on Mg(2+) as a cofactor.

Its subcellular location is the cytoplasm. The catalysed reaction is (7R,8S)-7,8-diammoniononanoate + CO2 + ATP = (4R,5S)-dethiobiotin + ADP + phosphate + 3 H(+). It participates in cofactor biosynthesis; biotin biosynthesis; biotin from 7,8-diaminononanoate: step 1/2. Functionally, catalyzes a mechanistically unusual reaction, the ATP-dependent insertion of CO2 between the N7 and N8 nitrogen atoms of 7,8-diaminopelargonic acid (DAPA, also called 7,8-diammoniononanoate) to form a ureido ring. This is ATP-dependent dethiobiotin synthetase BioD from Pseudomonas aeruginosa (strain ATCC 15692 / DSM 22644 / CIP 104116 / JCM 14847 / LMG 12228 / 1C / PRS 101 / PAO1).